The primary structure comprises 205 residues: Mitotic spindle assembly checkpoint protein MAD2A (205 aa).

The residue at position 2 (Ala2) is an N-acetylalanine. Phosphoserine occurs at positions 6, 130, 170, 178, 185, and 195. The 184-residue stretch at 14-197 (RGSAEIVAEF…TTIHKVNSMV (184 aa)) folds into the HORMA domain. A required for assuming the closed conformation and for interaction with CDC20 region spans residues 195 to 205 (SMVAYKIPVND).

The protein belongs to the MAD2 family. In terms of assembly, monomer and homodimer. Heterodimerizes with MAD2L1 in order to form a tetrameric MAD1L1-MAD2L1 core complex. In the closed and open conformation, interacts with MAD1L1. Formation of a heterotetrameric core complex containing two molecules each of MAD1L1 and of MAD2L1 promotes binding of another molecule of MAD2L1 to each MAD2L1, resulting in a heterohexamer. Interacts with MAD2L1BP. Interacts with ADAM17/TACE. Interacts with CDC20. Dimeric MAD2L1 in the closed conformation interacts with CDC20. Monomeric MAD2L1 in the open conformation does not interact with CDC20. CDC20 competes with MAD1L1 for MAD2L1 binding. In the closed conformation, interacts with BUB1B. Interacts with TTK. Interacts with TPR. Binds to UBD (via ubiquitin-like 1 domain) during mitosis. Interacts with isoform 1 and isoform 2 of NEK2. Interacts with HSF1; this interaction occurs in mitosis. Interacts with isoform 3 of MAD1L1; this interaction leads to the cytoplasmic sequestration of MAD2L1. Phosphorylated on multiple serine residues. The level of phosphorylation varies during the cell cycle and is highest during mitosis. Phosphorylation abolishes interaction with MAD1L1 and reduces interaction with CDC20. Phosphorylated by NEK2.

It localises to the nucleus. Its subcellular location is the chromosome. The protein resides in the centromere. It is found in the kinetochore. The protein localises to the cytoplasm. It localises to the cytoskeleton. Its subcellular location is the spindle pole. In terms of biological role, component of the spindle-assembly checkpoint that prevents the onset of anaphase until all chromosomes are properly aligned at the metaphase plate. In the closed conformation (C-MAD2) forms a heterotetrameric complex with MAD1L1 at unattached kinetochores during prometaphase, the complex recruits open conformation molecules of MAD2L1 (O-MAD2) and then promotes the conversion of O-MAD2 to C-MAD2. Required for the execution of the mitotic checkpoint which monitors the process of kinetochore-spindle attachment and inhibits the activity of the anaphase promoting complex by sequestering CDC20 until all chromosomes are aligned at the metaphase plate. This is Mitotic spindle assembly checkpoint protein MAD2A (MAD2L1) from Homo sapiens (Human).